We begin with the raw amino-acid sequence, 179 residues long: Large ribosomal subunit protein uL5 (179 aa).

It belongs to the universal ribosomal protein uL5 family. In terms of assembly, part of the 50S ribosomal subunit; part of the 5S rRNA/L5/L18/L25 subcomplex. Contacts the 5S rRNA and the P site tRNA. Forms a bridge to the 30S subunit in the 70S ribosome.

This is one of the proteins that bind and probably mediate the attachment of the 5S RNA into the large ribosomal subunit, where it forms part of the central protuberance. In the 70S ribosome it contacts protein S13 of the 30S subunit (bridge B1b), connecting the 2 subunits; this bridge is implicated in subunit movement. Contacts the P site tRNA; the 5S rRNA and some of its associated proteins might help stabilize positioning of ribosome-bound tRNAs. The chain is Large ribosomal subunit protein uL5 from Janthinobacterium sp. (strain Marseille) (Minibacterium massiliensis).